The following is a 218-amino-acid chain: uncharacterized protein (218 aa).

It belongs to the mimivirus L6/L7/L57 family.

This is an uncharacterized protein from Acanthamoeba polyphaga mimivirus (APMV).